The primary structure comprises 155 residues: Leader peptidase HopD (155 aa).

This sequence belongs to the peptidase A24 family.

The chain is Leader peptidase HopD (hopD) from Salmonella typhimurium (strain LT2 / SGSC1412 / ATCC 700720).